The following is a 315-amino-acid chain: Acetaldehyde dehydrogenase (315 aa).

Residue 13 to 16 coordinates NAD(+); the sequence is SGNI. Residue Cys131 is the Acyl-thioester intermediate of the active site. Residues 163–171 and Asn290 each bind NAD(+); that span reads SAGPGTRAN.

It belongs to the acetaldehyde dehydrogenase family.

It carries out the reaction acetaldehyde + NAD(+) + CoA = acetyl-CoA + NADH + H(+). In Xanthobacter autotrophicus (strain ATCC BAA-1158 / Py2), this protein is Acetaldehyde dehydrogenase.